Consider the following 629-residue polypeptide: Embryonic polyadenylate-binding protein B (629 aa).

RRM domains follow at residues 11–89 (ASLY…WSQR), 99–175 (GNVF…HFKS), 191–268 (TNVY…RAQK), and 294–370 (VNLY…LAQR). Residues 539–616 (QEPLTASLLA…AVAVLQAHQA (78 aa)) form the PABC domain.

Belongs to the polyadenylate-binding protein type-1 family. Interacts with dazl in an RNA-independent manner. The C-terminus can self-associate and also interact with the C-terminus of pabpc1, independently of RNA. RRM 1 and RRM 2 interact with both eif4g1 and paip1, and the C-terminus also interacts with paip1. Prior to oocyte maturation, found in a complex with dazl and pum2 proteins and spdy1 mRNA; pum2 dissociates from the complex during maturation. Interacts with the translation termination factor sup35/erf3.

Its subcellular location is the cytoplasm. In terms of biological role, binds and protects the poly(A) tail of mRNA with or without an AU-rich element (ARE) and prevents mRNA deadenylation. Stimulates the translation of mRNAs to which it is bound during early development. This Xenopus laevis (African clawed frog) protein is Embryonic polyadenylate-binding protein B (epabp-b).